Here is a 509-residue protein sequence, read N- to C-terminus: 2,3-bisphosphoglycerate-independent phosphoglycerate mutase (509 aa).

The Mn(2+) site is built by aspartate 13 and serine 63. Serine 63 (phosphoserine intermediate) is an active-site residue. Residues histidine 124, 154 to 155 (RD), arginine 186, arginine 192, 261 to 264 (RPDR), and lysine 335 each bind substrate. Mn(2+) is bound by residues aspartate 400, histidine 404, aspartate 441, histidine 442, and histidine 459.

It belongs to the BPG-independent phosphoglycerate mutase family. In terms of assembly, monomer. It depends on Mn(2+) as a cofactor.

The catalysed reaction is (2R)-2-phosphoglycerate = (2R)-3-phosphoglycerate. Its pathway is carbohydrate degradation; glycolysis; pyruvate from D-glyceraldehyde 3-phosphate: step 3/5. Catalyzes the interconversion of 2-phosphoglycerate and 3-phosphoglycerate. This is 2,3-bisphosphoglycerate-independent phosphoglycerate mutase from Desulforudis audaxviator (strain MP104C).